The following is a 186-amino-acid chain: Putative manganese efflux pump MntP (186 aa).

The next 6 helical transmembrane spans lie at 3-23 (PIAL…AAIG), 39-59 (IGII…LIGK), 65-85 (VEAW…LHMI), 109-129 (CLTA…LAFI), 133-153 (IWIA…IGIM), and 166-186 (AEIF…YGQL).

The protein belongs to the MntP (TC 9.B.29) family.

The protein resides in the cell inner membrane. Functionally, probably functions as a manganese efflux pump. In Alcanivorax borkumensis (strain ATCC 700651 / DSM 11573 / NCIMB 13689 / SK2), this protein is Putative manganese efflux pump MntP.